The following is a 187-amino-acid chain: Casparian strip membrane protein 5 (187 aa).

Over 1–24 the chain is Cytoplasmic; the sequence is MKSGQAEIMETSKGIQKSGLMSRR. A helical transmembrane segment spans residues 25–45; it reads IAILEFILRIVAFFNTIGSAI. At 46 to 74 the chain is on the extracellular side; sequence LMGTTHETLPFFTQFIRFQAEYNDLPALT. The helical transmembrane segment at 75–95 threads the bilayer; sequence FFVVANAVVSGYLILSLTLAF. Over 96–107 the chain is Cytoplasmic; the sequence is VHIVKRKTQNTR. The chain crosses the membrane as a helical span at residues 108–128; sequence ILLIILDVAMLGLLTSGASSA. Over 129–161 the chain is Extracellular; the sequence is AAIVYLAHNGNNKTNWFAICQQFNSFCERISGS. Asparagine 140 carries N-linked (GlcNAc...) asparagine glycosylation. A helical transmembrane segment spans residues 162 to 182; sequence LIGSFIAIVLLILLILLSAIA. Over 183–187 the chain is Cytoplasmic; the sequence is LSRRH.

Belongs to the Casparian strip membrane proteins (CASP) family. In terms of assembly, homodimer and heterodimers with other CASP proteins. Interacts with CASP1, CASP3 and CASP4.

It localises to the cell membrane. Its function is as follows. Regulates membrane-cell wall junctions and localized cell wall deposition. Required for establishment of the Casparian strip membrane domain (CSD) and the subsequent formation of Casparian strips, a cell wall modification of the root endodermis that determines an apoplastic barrier between the intraorganismal apoplasm and the extraorganismal apoplasm and prevents lateral diffusion. The sequence is that of Casparian strip membrane protein 5 (CASP5) from Arabidopsis thaliana (Mouse-ear cress).